We begin with the raw amino-acid sequence, 116 residues long: Dynein light chain Tctex-type 3 (116 aa).

Position 4 is a 3'-nitrotyrosine (Y4).

Belongs to the dynein light chain Tctex-type family. In terms of assembly, homodimer. The cytoplasmic dynein 1 complex consists of two catalytic heavy chains (HCs) and a number of non-catalytic subunits presented by intermediate chains (ICs), light intermediate chains (LICs) and light chains (LCs); the composition seems to vary in respect to the IC, LIC and LC composition. The heavy chain homodimer serves as a scaffold for the probable homodimeric assembly of the respective non-catalytic subunits. The ICs and LICs bind directly to the HC dimer and the LCs assemble on the IC dimer. DYNLT1 and DYNLT3 compete for association with dynein IC (DYNC1I1 or DYNC1I2). Self-associates. Interacts with DYNC1I1 and DYNC1I2. Interacts with BUB3. Interacts with SATB1 in nucleus to form complex with matrix attachment regions (MARs) of DNA.

It is found in the nucleus. It localises to the cytoplasm. The protein localises to the cytoskeleton. The protein resides in the chromosome. Its subcellular location is the centromere. It is found in the kinetochore. In terms of biological role, acts as one of several non-catalytic accessory components of the cytoplasmic dynein 1 complex that are thought to be involved in linking dynein to cargos and to adapter proteins that regulate dynein function. Cytoplasmic dynein 1 acts as a motor for the intracellular retrograde motility of vesicles and organelles along microtubules. Probably binds BUB3 as part of transport cargo. Required for the efficient progression through mitosis. The chain is Dynein light chain Tctex-type 3 (DYNLT3) from Homo sapiens (Human).